An 833-amino-acid chain; its full sequence is Leucine--tRNA ligase (833 aa).

The 'HIGH' region signature appears at 41-52; the sequence is PYPSGAGLHVGH. The 'KMSKS' region signature appears at 610-614; the sequence is KMSKS. Residue Lys613 participates in ATP binding.

It belongs to the class-I aminoacyl-tRNA synthetase family.

It localises to the cytoplasm. It carries out the reaction tRNA(Leu) + L-leucine + ATP = L-leucyl-tRNA(Leu) + AMP + diphosphate. The chain is Leucine--tRNA ligase from Streptococcus pneumoniae serotype 4 (strain ATCC BAA-334 / TIGR4).